The primary structure comprises 464 residues: Protein FAM90A15 (464 aa).

Disordered regions lie at residues 1–42 (MMAR…DPRL), 70–389 (PATL…HDGA), and 415–437 (HSPEKPGAFLAQSPHVSEKSEAP). 2 stretches are compositionally biased toward basic and acidic residues: residues 74-89 (GKKEGKENLKPWKPRV) and 97-114 (NKDKGEKEERPRQQDPQR). Residues 180 to 197 (LASLSPLRKASLSSSSSL) are compositionally biased toward low complexity.

Belongs to the FAM90 family.

This Homo sapiens (Human) protein is Protein FAM90A15.